A 181-amino-acid polypeptide reads, in one-letter code: Adenine phosphoribosyltransferase (181 aa).

It belongs to the purine/pyrimidine phosphoribosyltransferase family. In terms of assembly, homodimer.

Its subcellular location is the cytoplasm. The enzyme catalyses AMP + diphosphate = 5-phospho-alpha-D-ribose 1-diphosphate + adenine. The protein operates within purine metabolism; AMP biosynthesis via salvage pathway; AMP from adenine: step 1/1. Functionally, catalyzes a salvage reaction resulting in the formation of AMP, that is energically less costly than de novo synthesis. In Aliivibrio salmonicida (strain LFI1238) (Vibrio salmonicida (strain LFI1238)), this protein is Adenine phosphoribosyltransferase.